The following is a 185-amino-acid chain: MKRNVLLLPLLIFLLIAAALLWQLARNAQGDDPTNLESALTGKPVPAFRLESLETPGQYYQAEVLTQGKPVLLNVWATWCPTCRAEHQYLNQLSAQGIRVVGLNYKDDRAKAVAWLKELGNPYALSLSDSDGMLGLDLGVYGAPETFLIDGRGIIRYRHAGDLNARVWESELKPLWDRYSREAAQ.

Topologically, residues 1–4 (MKRN) are cytoplasmic. The chain crosses the membrane as a helical span at residues 5 to 25 (VLLLPLLIFLLIAAALLWQLA). Over 26-185 (RNAQGDDPTN…WDRYSREAAQ (160 aa)) the chain is Periplasmic. Residues 39–177 (ALTGKPVPAF…WESELKPLWD (139 aa)) form the Thioredoxin domain. The cysteines at positions 80 and 83 are disulfide-linked.

Belongs to the thioredoxin family. DsbE subfamily.

The protein localises to the cell inner membrane. Its function is as follows. Involved in disulfide bond formation. Catalyzes a late, reductive step in the assembly of periplasmic c-type cytochromes, probably the reduction of disulfide bonds of the apocytochrome c to allow covalent linkage with the heme. Possible subunit of a heme lyase. This Salmonella typhimurium (strain LT2 / SGSC1412 / ATCC 700720) protein is Thiol:disulfide interchange protein DsbE (dsbE1).